Here is a 413-residue protein sequence, read N- to C-terminus: L-cysteine:1D-myo-inositol 2-amino-2-deoxy-alpha-D-glucopyranoside ligase (413 aa).

Residue cysteine 15 participates in Zn(2+) binding. Residues 15-18 (CGIT), threonine 30, and 53-55 (NVT) contribute to the L-cysteinyl-5'-AMP site. A 'HIGH' region motif is present at residues 17-27 (ITPYDATHLGH). Residues 155–160 (ERGGDP) carry the 'ERGGDP' region motif. Tryptophan 195 lines the L-cysteinyl-5'-AMP pocket. Cysteine 199 contacts Zn(2+). 217–219 (GTD) serves as a coordination point for L-cysteinyl-5'-AMP. Histidine 224 is a Zn(2+) binding site. Valine 251 contributes to the L-cysteinyl-5'-AMP binding site. Positions 257-261 (KMSKS) match the 'KMSKS' region motif.

This sequence belongs to the class-I aminoacyl-tRNA synthetase family. MshC subfamily. As to quaternary structure, monomer. Zn(2+) serves as cofactor.

It catalyses the reaction 1D-myo-inositol 2-amino-2-deoxy-alpha-D-glucopyranoside + L-cysteine + ATP = 1D-myo-inositol 2-(L-cysteinylamino)-2-deoxy-alpha-D-glucopyranoside + AMP + diphosphate + H(+). Its function is as follows. Catalyzes the ATP-dependent condensation of GlcN-Ins and L-cysteine to form L-Cys-GlcN-Ins. In Frankia alni (strain DSM 45986 / CECT 9034 / ACN14a), this protein is L-cysteine:1D-myo-inositol 2-amino-2-deoxy-alpha-D-glucopyranoside ligase.